The following is a 157-amino-acid chain: CASP-like protein 1 (157 aa).

The Cytoplasmic portion of the chain corresponds to 1 to 13 (MKTEARDGGSEWR). A helical membrane pass occupies residues 14-34 (WVAIFELFLRLAAIVSTSVAV). Topologically, residues 35 to 40 (YAAMGK) are extracellular. Residues 41 to 61 (IFVVAVNGVACFYLLMSLPVS) form a helical membrane-spanning segment. Over 62 to 82 (IFNIMRPHAYPANRVFLNIMD) the chain is Cytoplasmic. Residues 83-103 (MVMVALVTAGALAAGIVYLVE) traverse the membrane as a helical segment. The Extracellular portion of the chain corresponds to 104 to 121 (KAGNARASWVSVWSQFDS). A helical membrane pass occupies residues 122-142 (SSCFAVLALILHVLLSGVILY). Residues 143–157 (KQALNIKFKKLDSVD) are Cytoplasmic-facing.

It belongs to the Casparian strip membrane proteins (CASP) family. As to quaternary structure, homodimer and heterodimers.

The protein resides in the cell membrane. In Picea sitchensis (Sitka spruce), this protein is CASP-like protein 1.